A 498-amino-acid chain; its full sequence is ATP synthase subunit beta, chloroplastic (498 aa).

172 to 179 (GGAGVGKT) is a binding site for ATP.

It belongs to the ATPase alpha/beta chains family. F-type ATPases have 2 components, CF(1) - the catalytic core - and CF(0) - the membrane proton channel. CF(1) has five subunits: alpha(3), beta(3), gamma(1), delta(1), epsilon(1). CF(0) has four main subunits: a(1), b(1), b'(1) and c(9-12).

It localises to the plastid. Its subcellular location is the chloroplast thylakoid membrane. The enzyme catalyses ATP + H2O + 4 H(+)(in) = ADP + phosphate + 5 H(+)(out). In terms of biological role, produces ATP from ADP in the presence of a proton gradient across the membrane. The catalytic sites are hosted primarily by the beta subunits. The protein is ATP synthase subunit beta, chloroplastic of Lactuca sativa (Garden lettuce).